The sequence spans 314 residues: Endolytic peptidoglycan transglycosylase RlpA (314 aa).

A signal peptide spans 1-19 (MGWALKKVCFLGVIFLISA). The N-palmitoyl cysteine moiety is linked to residue Cys-20. The S-diacylglycerol cysteine moiety is linked to residue Cys-20. Positions 241–314 (SVSGGKFSLQ…YNQNAVLTRE (74 aa)) constitute an SPOR domain.

This sequence belongs to the RlpA family.

It localises to the cell membrane. In terms of biological role, lytic transglycosylase with a strong preference for naked glycan strands that lack stem peptides. This chain is Endolytic peptidoglycan transglycosylase RlpA, found in Helicobacter pylori (strain J99 / ATCC 700824) (Campylobacter pylori J99).